A 263-amino-acid chain; its full sequence is Small ribosomal subunit protein eS1 (263 aa).

The segment at 235–263 (HGEGGGGKGEAGDKSERPEGYEPPVQESV) is disordered. Residues 244–254 (EAGDKSERPEG) are compositionally biased toward basic and acidic residues.

This sequence belongs to the eukaryotic ribosomal protein eS1 family. As to quaternary structure, component of the small ribosomal subunit. Mature ribosomes consist of a small (40S) and a large (60S) subunit. The 40S subunit contains about 33 different proteins and 1 molecule of RNA (18S). The 60S subunit contains about 49 different proteins and 3 molecules of RNA (28S, 5.8S and 5S).

The protein localises to the cytoplasm. This chain is Small ribosomal subunit protein eS1, found in Bombyx mori (Silk moth).